Reading from the N-terminus, the 313-residue chain is Biotin synthase (313 aa).

The Radical SAM core domain maps to 28–258; that stretch reads NFGNDIELCS…LFPQARLRLS (231 aa). The [4Fe-4S] cluster site is built by cysteine 46, cysteine 50, and cysteine 53. Residues cysteine 90, cysteine 121, cysteine 181, and arginine 256 each contribute to the [2Fe-2S] cluster site.

The protein belongs to the radical SAM superfamily. Biotin synthase family. As to quaternary structure, homodimer. Requires [4Fe-4S] cluster as cofactor. [2Fe-2S] cluster is required as a cofactor.

It carries out the reaction (4R,5S)-dethiobiotin + (sulfur carrier)-SH + 2 reduced [2Fe-2S]-[ferredoxin] + 2 S-adenosyl-L-methionine = (sulfur carrier)-H + biotin + 2 5'-deoxyadenosine + 2 L-methionine + 2 oxidized [2Fe-2S]-[ferredoxin]. It functions in the pathway cofactor biosynthesis; biotin biosynthesis; biotin from 7,8-diaminononanoate: step 2/2. Functionally, catalyzes the conversion of dethiobiotin (DTB) to biotin by the insertion of a sulfur atom into dethiobiotin via a radical-based mechanism. This chain is Biotin synthase, found in Francisella tularensis subsp. tularensis (strain FSC 198).